Reading from the N-terminus, the 208-residue chain is U11/U12 small nuclear ribonucleoprotein 35 kDa protein (208 aa).

Positions 50-128 constitute an RRM domain; it reads LTLFVARLNP…YELLVDVEQE (79 aa). The tract at residues 133-208 is disordered; sequence GWRPRRLGGG…TEDRTHRHTY (76 aa). A compositionally biased stretch (basic and acidic residues) spans 171-208; the sequence is RPAEPRGRETERERDRRDYRDRRHERTHTEDRTHRHTY.

It localises to the nucleus. In Danio rerio (Zebrafish), this protein is U11/U12 small nuclear ribonucleoprotein 35 kDa protein (snrnp35).